The following is a 422-amino-acid chain: UDP-N-acetylglucosamine 1-carboxyvinyltransferase (422 aa).

24–25 (KN) provides a ligand contact to phosphoenolpyruvate. A UDP-N-acetyl-alpha-D-glucosamine-binding site is contributed by Arg93. Cys117 functions as the Proton donor in the catalytic mechanism. Cys117 is subject to 2-(S-cysteinyl)pyruvic acid O-phosphothioketal. UDP-N-acetyl-alpha-D-glucosamine is bound by residues 122-126 (RPVDL), 162-165 (KVSV), Asp307, and Ile329.

It belongs to the EPSP synthase family. MurA subfamily.

It localises to the cytoplasm. It carries out the reaction phosphoenolpyruvate + UDP-N-acetyl-alpha-D-glucosamine = UDP-N-acetyl-3-O-(1-carboxyvinyl)-alpha-D-glucosamine + phosphate. It participates in cell wall biogenesis; peptidoglycan biosynthesis. Cell wall formation. Adds enolpyruvyl to UDP-N-acetylglucosamine. In Vibrio atlanticus (strain LGP32) (Vibrio splendidus (strain Mel32)), this protein is UDP-N-acetylglucosamine 1-carboxyvinyltransferase.